Here is a 368-residue protein sequence, read N- to C-terminus: Histone macroH2A1.1 (368 aa).

The interval 154 to 177 (AVSSSSAAASSSSSASSSSSVAPK) is disordered. Residues 184–368 (TILSKKTLHL…VYNAELINTN (185 aa)) form the Macro domain. The a glycoprotein site is built by Asp-203, Leu-204, Gln-225, Val-226, Ser-275, Gly-313, Ser-314, Gly-315, Asn-316, and Asn-317.

It belongs to the histone H2A family. In terms of assembly, the nucleosome is a histone octamer containing two molecules each of H2A, H2B, H3 and H4 assembled in one H3-H4 heterotetramer and two H2A-H2B heterodimers.

It localises to the nucleus. Its subcellular location is the chromosome. Its function is as follows. Variant histone H2A which replaces conventional H2A in a subset of nucleosomes where it represses transcription. Nucleosomes wrap and compact DNA into chromatin, limiting DNA accessibility to the cellular machineries which require DNA as a template. Histones thereby play a central role in transcription regulation, DNA repair, DNA replication and chromosomal stability. DNA accessibility is regulated via a complex set of post-translational modifications of histones, also called histone code, and nucleosome remodeling. Specifically binds poly-ADP-ribose and plays a key role in NAD(+) metabolism. Able to bind to the ends of poly-ADP-ribose chains created by PARP1 and cap them. This prevents PARP1 from further addition of ADP-ribose and thus limits the consumption of nuclear NAD(+), allowing the cell to maintain proper NAD(+) levels in both the nucleus and the mitochondria to promote proper mitochondrial respiration. The protein is Histone macroH2A1.1 of Capsaspora owczarzaki (strain ATCC 30864).